Reading from the N-terminus, the 198-residue chain is Dephospho-CoA kinase (198 aa).

The DPCK domain maps to 3–198; that stretch reads VVGLTGGIGA…HRRYSLLAAA (196 aa). 11–16 serves as a coordination point for ATP; it reads GAGKST.

It belongs to the CoaE family.

It localises to the cytoplasm. It carries out the reaction 3'-dephospho-CoA + ATP = ADP + CoA + H(+). It participates in cofactor biosynthesis; coenzyme A biosynthesis; CoA from (R)-pantothenate: step 5/5. In terms of biological role, catalyzes the phosphorylation of the 3'-hydroxyl group of dephosphocoenzyme A to form coenzyme A. The sequence is that of Dephospho-CoA kinase from Methylococcus capsulatus (strain ATCC 33009 / NCIMB 11132 / Bath).